Here is a 105-residue protein sequence, read N- to C-terminus: MINDIKQLHKRYRLLVHLSNNHVYAQIIDDLNNRTVLSVSTLTPQVKSKLSITCNKKAAELVGEYVAQQALNFGIRNVVFDRGRKLYHGKVEVLANSARSFGLKF.

Belongs to the universal ribosomal protein uL18 family. As to quaternary structure, part of the 50S ribosomal subunit; contacts the 5S rRNA.

It is found in the plastid. The protein localises to the chloroplast. Binds 5S rRNA, forms part of the central protuberance of the 50S subunit. The polypeptide is Large ribosomal subunit protein uL18c (rpl18) (Cyanidium caldarium (Red alga)).